A 481-amino-acid polypeptide reads, in one-letter code: ATP synthase subunit beta, plastid (481 aa).

Position 162–169 (glycine 162–threonine 169) interacts with ATP.

Belongs to the ATPase alpha/beta chains family. In terms of assembly, F-type ATPases have 2 components, CF(1) - the catalytic core - and CF(0) - the membrane proton channel. CF(1) has five subunits: alpha(3), beta(3), gamma(1), delta(1), epsilon(1). CF(0) has four main subunits: a(1), b(1), b'(1) and c(9-12).

The protein resides in the plastid membrane. It carries out the reaction ATP + H2O + 4 H(+)(in) = ADP + phosphate + 5 H(+)(out). Its function is as follows. Produces ATP from ADP in the presence of a proton gradient across the membrane. The catalytic sites are hosted primarily by the beta subunits. This Prototheca wickerhamii protein is ATP synthase subunit beta, plastid (atpB).